Here is a 237-residue protein sequence, read N- to C-terminus: MSDSMESKTQQVVIPEDEECLMSGTRYSDISSRLQTKFGIKSLAEYTKQSRNPLVLQLLSFLFLAGLLLIILILVSKVPSSEVQNKIYQELMQLKAEVHDGLCQPCARDWTFFNGSCYFFSKSQRNWHNSTTACQELGAQLVIIETDEEQTFLQQTSKARGPTWMGLSDMHNEATWHWVDGSPLSPSFTRYWNRGEPNNVGDEDCAEFSGDGWNDLSCDKLLFWICKKVSTSSCTTK.

Residues 1–54 (MSDSMESKTQQVVIPEDEECLMSGTRYSDISSRLQTKFGIKSLAEYTKQSRNPL) are Cytoplasmic-facing. Residues 55-75 (VLQLLSFLFLAGLLLIILILV) form a helical; Signal-anchor for type II membrane protein membrane-spanning segment. Topologically, residues 76–237 (SKVPSSEVQN…KVSTSSCTTK (162 aa)) are extracellular. Cysteines 106 and 117 form a disulfide. One can recognise a C-type lectin domain in the interval 112 to 227 (FFNGSCYFFS…CDKLLFWICK (116 aa)). N-linked (GlcNAc...) asparagine glycans are attached at residues Asn-114 and Asn-129. Disulfide bonds link Cys-134–Cys-226 and Cys-205–Cys-218. Residues Glu-196, Asn-198, Glu-203, Asn-214, and Asp-215 each coordinate Ca(2+).

It localises to the membrane. In terms of biological role, probable pathogen-recognition receptor. May mediate the endocytosis of pathogens which are subsequently degraded in lysosomal compartments. May recognize in a calcium-dependent manner high mannose N-linked oligosaccharides in a variety of pathogen antigens. This Mus musculus (Mouse) protein is CD209 antigen-like protein D (Cd209d).